Consider the following 1308-residue polypeptide: MLKLKKLQLLGFKSFCDRTELKFPGDGIAAIVGPNGCGKSNIADAISWVLGEQSAKSLRGIHMQDVIFAGTRDRKPTGMAEVSLTLIDPEQYEGKIVEPEIEIRDEMPDDWDEAAAREASMEEVDEYTAEVQPGTNTEAEATEQQAAPSEGAAPTTEATAPSTENEAAPSEVAEGQPSDAQAAVINPNAVVLKIRRRKFNTNRFKKGEICVTRRLFRSGDSEYLLNGKLSRLRDVHDIFMGTGLGPESYAIIEQGRIGQILSSKPTDRRAIIEEAAGITKYKTKKRLAEARLEDAKSNLARVNDIFDEVTRQMNSLKRQAAKAERYAKLRDEMREKLRVVLASKFALIDAEIAGLEAELTTVTEEIATRTDAVQQMDNEHGERVQRGYAIDAEAKQNRESLNNVSREMDRAAQRRRTNEERCAELVARSAGAEAEIQNTTEQLGRLEEELATNRQVLESAAADVAVAQSDLQTKQQEASAAAANLMNVEREQEQRRSQIFQAVNAASNVRNRITQAEERIANLDREHGRVTGELSSATLQLESFGGQRGQLGLEFESANTRVNALSSEITDARGSLQQKRQEEIEAKRHVDTLRAEYATLLGKKGSLESVINEHGYSTESVKRLFQSGGLREGNTPAGVLADFLEVEDKYEHVVEDFLRDELNYVVVKSWGAADEGLRLLKGDVDGRATFLVHPSDSQAKFSFVLDESMRLPFTPDRVTPMKNCIRVLNGFGKSLEVVLPKLGNGYIVPDPAIGRELALENPDAFFLSQSGECFHNVTVTGGKQRSQGPLSLKRELRDVMRCIDDVERSLRDGEARVLMLGKEIAELTSLLQRLEDEKREGEKQAMTSGHTLRQLENEMARVRDRHATYERELQRVSNEKSERENAIGGLRMELEAAEARHQELEAAMNAATQSLDELRTARDNASHAASEARAQAAALEERHRAAASSLQRIESMVQEVSARIGKLKGQVESAAAEKQQRESENETIAEQLVTWTAEREAAEARDRELQTESEQVRARIAEIEEELKTARQALDAARDRRGELHASVARLQSDGEHMAETCVQELSVTRPDLMAIEELPRLTGDELAVADTEQKDMRTKLENMGPVNMMALEEYKETAQRHEFLETQRKDLLDSIENTQNTIKEIDQITKVKFDEAFAAINENFGKAFKKLFGGGQGFMKLTDELNSSDSGIDVIASPPGKKLQNVLLLSGGEKTLTAFSLLVGIFQYAPSPFCILDEVDAPLDETNVARFNELVKEMSMQTQFILITHSKRTMATAPVMYGVTMQEPGVSKIVSVRFGEEAARATA.

Position 34–41 (34–41 (PNGCGKSN)) interacts with ATP. Residues 115–181 (AAREASMEEV…VAEGQPSDAQ (67 aa)) form a disordered region. The segment covering 137–169 (TEAEATEQQAAPSEGAAPTTEATAPSTENEAAP) has biased composition (low complexity). Residues 278-600 (ITKYKTKKRL…DTLRAEYATL (323 aa)) are a coiled coil. Positions 637-757 (AGVLADFLEV…VPDPAIGREL (121 aa)) constitute an SMC hinge domain. 2 coiled-coil regions span residues 791-1046 (SLKR…ELHA) and 1110-1148 (MALE…EIDQ).

It belongs to the SMC family. In terms of assembly, homodimer.

The protein resides in the cytoplasm. Functionally, required for chromosome condensation and partitioning. This is Chromosome partition protein Smc from Koribacter versatilis (strain Ellin345).